Consider the following 291-residue polypeptide: Probable 2-(5''-triphosphoribosyl)-3'-dephosphocoenzyme-A synthase (291 aa).

Belongs to the CitG/MdcB family.

The enzyme catalyses 3'-dephospho-CoA + ATP = 2'-(5''-triphospho-alpha-D-ribosyl)-3'-dephospho-CoA + adenine. Functionally, involved in the formation of 2-(5''-phosphoribosyl)-3'-dephosphocoenzyme-A, the prosthetic group of the acyl-carrier protein of the malonate decarboxylase. This is Probable 2-(5''-triphosphoribosyl)-3'-dephosphocoenzyme-A synthase from Pseudomonas syringae pv. tomato (strain ATCC BAA-871 / DC3000).